A 485-amino-acid chain; its full sequence is Argininosuccinate lyase (485 aa).

It belongs to the lyase 1 family. Argininosuccinate lyase subfamily.

The protein localises to the cytoplasm. The catalysed reaction is 2-(N(omega)-L-arginino)succinate = fumarate + L-arginine. It participates in amino-acid biosynthesis; L-arginine biosynthesis; L-arginine from L-ornithine and carbamoyl phosphate: step 3/3. The sequence is that of Argininosuccinate lyase from Halobacterium salinarum (strain ATCC 29341 / DSM 671 / R1).